The following is a 629-amino-acid chain: Dolichyl-diphosphooligosaccharide--protein glycosyltransferase subunit 2 (629 aa).

The N-terminal stretch at 1–22 is a signal peptide; sequence MAPPGSRTVLLLALTIIARTQA. Residues 23–541 are Lumenal-facing; that stretch reads LKPTHYLTKH…RDPEKRPPTV (519 aa). Residue Asn106 is glycosylated (N-linked (GlcNAc...) asparagine). Residue Lys154 forms a Glycyl lysine isopeptide (Lys-Gly) (interchain with G-Cter in ubiquitin) linkage. Residues 542–562 traverse the membrane as a helical segment; it reads VSNTFTGLILSPLLLLFALWI. Residues 563 to 570 are Cytoplasmic-facing; it reads RIGAKISN. Residues 571 to 591 form a helical membrane-spanning segment; the sequence is FTFGLTIIFHLGHAMLAMYVY. Residues 592–594 are Lumenal-facing; that stretch reads WTQ. A helical transmembrane segment spans residues 595–615; it reads LNMFQTLKYLAILGSVTFLAG. Topologically, residues 616–629 are cytoplasmic; sequence NRMLAQQAIKRTAH.

This sequence belongs to the SWP1 family. Component of the oligosaccharyltransferase (OST) complex. OST exists in two different complex forms which contain common core subunits RPN1, RPN2, OST48, OST4, DAD1 and TMEM258, either STT3A or STT3B as catalytic subunits, and form-specific accessory subunits. STT3A complex assembly occurs through the formation of 3 subcomplexes. Subcomplex 1 contains RPN1 and TMEM258, subcomplex 2 contains the STT3A-specific subunits STT3A, DC2/OSTC, and KCP2 as well as the core subunit OST4, and subcomplex 3 contains RPN2, DAD1, and OST48. The STT3A complex can form stable complexes with the Sec61 complex or with both the Sec61 and TRAP complexes. Interacts with DDI2. Interacts with TMEM35A/NACHO.

The protein resides in the endoplasmic reticulum. Its subcellular location is the endoplasmic reticulum membrane. Its pathway is protein modification; protein glycosylation. In terms of biological role, subunit of the oligosaccharyl transferase (OST) complex that catalyzes the initial transfer of a defined glycan (Glc(3)Man(9)GlcNAc(2) in eukaryotes) from the lipid carrier dolichol-pyrophosphate to an asparagine residue within an Asn-X-Ser/Thr consensus motif in nascent polypeptide chains, the first step in protein N-glycosylation. N-glycosylation occurs cotranslationally and the complex associates with the Sec61 complex at the channel-forming translocon complex that mediates protein translocation across the endoplasmic reticulum (ER). All subunits are required for a maximal enzyme activity. This chain is Dolichyl-diphosphooligosaccharide--protein glycosyltransferase subunit 2, found in Sus scrofa (Pig).